Reading from the N-terminus, the 34-residue chain is U10-ctenitoxin-Pr1a (34 aa).

4 disulfide bridges follow: Cys-2–Cys-15, Cys-9–Cys-20, Cys-14–Cys-31, and Cys-22–Cys-29.

Expressed by the venom gland.

It localises to the secreted. Its function is as follows. Non-toxic to mice and insects. This is U10-ctenitoxin-Pr1a from Phoneutria reidyi (Brazilian Amazonian armed spider).